The chain runs to 27 residues: MGKGDRRTRRGKIWRGTYGKYRPRKKK.

Positions 1–13 (MGKGDRRTRRGKI) are enriched in basic residues. The interval 1–27 (MGKGDRRTRRGKIWRGTYGKYRPRKKK) is disordered.

Belongs to the bacterial ribosomal protein bTHX family. In terms of assembly, part of the 30S ribosomal subunit.

Binds at the top of the head of the 30S subunit. It stabilizes a number of different RNA elements and thus is important for subunit structure. This Thermus aquaticus protein is Small ribosomal subunit protein bTHX (rpsU).